Here is a 1361-residue protein sequence, read N- to C-terminus: Protein transport protein SEC16B homolog (1361 aa).

Residue S46 is modified to Phosphoserine. Disordered stretches follow at residues 82–109 (NEGASGSVGEDEPSSIAPEAVQFPHSDA), 487–513 (VDDAPQSFQSSQLFSPSAGRSSDGRPP), 984–1013 (PVGGMPPPAPHSTKGNLQGNEYQHQQQEAT), 1025–1062 (SSLMPPASVEPTHESGGSGRRMAVHTRSVSEPDFGRTP), 1163–1204 (ENKS…ARGR), 1216–1235 (NPPGRGNSHTMIPSPSVQTA), and 1306–1361 (SVNG…EVEL). The segment covering 491 to 503 (PQSFQSSQLFSPS) has biased composition (low complexity). Residues 996-1013 (TKGNLQGNEYQHQQQEAT) are compositionally biased toward polar residues. Polar residues-rich tracts occupy residues 1169 to 1200 (IPSNGNWSSGGPTPSENSSGIPPISHGSNQFS), 1222 to 1234 (NSHTMIPSPSVQT), and 1308 to 1325 (NGDNHQPPTSRRTASWSG). Residues 1326–1354 (NFNTSFTPPTSPSTFKPVLLNSSSSSLGE) show a composition bias toward low complexity.

This sequence belongs to the SEC16 family.

The protein resides in the golgi apparatus. Its subcellular location is the endoplasmic reticulum. Functionally, required for protein transport from the endoplasmic reticulum to the Golgi apparatus. This is Protein transport protein SEC16B homolog from Arabidopsis thaliana (Mouse-ear cress).